The following is a 530-amino-acid chain: Glucose-6-phosphate isomerase (530 aa).

The active-site Proton donor is the glutamate 335. Residues histidine 366 and lysine 495 contribute to the active site.

The protein belongs to the GPI family.

It localises to the cytoplasm. The enzyme catalyses alpha-D-glucose 6-phosphate = beta-D-fructose 6-phosphate. The protein operates within carbohydrate biosynthesis; gluconeogenesis. It participates in carbohydrate degradation; glycolysis; D-glyceraldehyde 3-phosphate and glycerone phosphate from D-glucose: step 2/4. Its function is as follows. Catalyzes the reversible isomerization of glucose-6-phosphate to fructose-6-phosphate. The polypeptide is Glucose-6-phosphate isomerase (Roseobacter denitrificans (strain ATCC 33942 / OCh 114) (Erythrobacter sp. (strain OCh 114))).